Here is a 50-residue protein sequence, read N- to C-terminus: U-megalopygitoxin(9)-Mo13 (50 aa).

A signal peptide spans 1–23 (MKLVFLFFIVAVMVSLFVGMTEA). Cys33 and Cys40 are oxidised to a cystine.

This sequence belongs to the caterpillar 9 family. As to expression, expressed by the venom apparatus.

The protein resides in the secreted. In terms of biological role, probable toxin. This Megalopyge opercularis (Southern flannel moth) protein is U-megalopygitoxin(9)-Mo13.